The following is a 177-amino-acid chain: Protein PrsK (177 aa).

A signal peptide spans 1–21; the sequence is MIKSTGALLLFAALSAGQAMA.

It localises to the fimbrium. This Escherichia coli protein is Protein PrsK (prsK).